Consider the following 373-residue polypeptide: tRNA-specific 2-thiouridylase MnmA (373 aa).

ATP contacts are provided by residues 12–19 (GMSGGVDS) and Met38. The interaction with target base in tRNA stretch occupies residues 98 to 100 (NPD). Cys103 (nucleophile) is an active-site residue. The cysteines at positions 103 and 200 are disulfide-linked. ATP is bound at residue Gly127. The interval 150 to 152 (KDQ) is interaction with tRNA. Catalysis depends on Cys200, which acts as the Cysteine persulfide intermediate. Residues 312–313 (RY) are interaction with tRNA.

The protein belongs to the MnmA/TRMU family.

It is found in the cytoplasm. It catalyses the reaction S-sulfanyl-L-cysteinyl-[protein] + uridine(34) in tRNA + AH2 + ATP = 2-thiouridine(34) in tRNA + L-cysteinyl-[protein] + A + AMP + diphosphate + H(+). Catalyzes the 2-thiolation of uridine at the wobble position (U34) of tRNA, leading to the formation of s(2)U34. The polypeptide is tRNA-specific 2-thiouridylase MnmA (Streptococcus uberis (strain ATCC BAA-854 / 0140J)).